Reading from the N-terminus, the 383-residue chain is AP-1-like transcription factor YAP6 (383 aa).

3 disordered regions span residues 1–64 (MQNP…ISVN), 83–113 (DYRS…SYNR), and 168–239 (TLPS…KAFR). Residues 13–64 (NQGSSSMATYNASEKNLNEHPSPQIAQPSTSQKLPYRINPTTTNGDTDISVN) show a composition bias toward polar residues. Residues 88–101 (HQSPIHPSYIIPPH) show a composition bias toward low complexity. Polar residues predominate over residues 168-184 (TLPSRNTSVTTAPPSFQ). Residues 185-206 (NSADTAKNSADNNDNNDNVTKP) are compositionally biased toward low complexity. The segment covering 213–222 (QLISSSGKTL) has biased composition (polar residues). The bZIP domain maps to 221–284 (TLRNTRRAAQ…NDNNILIAQH (64 aa)). The segment at 223–247 (RNTRRAAQNRTAQKAFRQRKEKYIK) is basic motif. The segment covering 227–237 (RAAQNRTAQKA) has biased composition (low complexity). Positions 249–277 (LEQKSKIFDDLLAENNNFKSLNDSLRNDN) are leucine-zipper.

It belongs to the bZIP family. YAP subfamily. In terms of assembly, homodimer.

It is found in the nucleus. Functionally, transcription activator involved in the regulation of genes expressed in response to environmental changes and metabolic requirements. According to genome-wide promoter binding and gene expression studies it regulates, among others, genes involved in ribosome biogenesis, protein synthesis, carbohydrate metabolism, and carbohydrate transport. It may also be involved in pleiotropic drug resistance. When overexpressed, it confers resistance to cisplatin, methylmethanosulfonate, and mitomycin C, and increases cellular tolerance to sodium and lithium. The polypeptide is AP-1-like transcription factor YAP6 (YAP6) (Saccharomyces cerevisiae (strain ATCC 204508 / S288c) (Baker's yeast)).